A 318-amino-acid chain; its full sequence is NADH-ubiquinone oxidoreductase chain 1 (318 aa).

A run of 8 helical transmembrane segments spans residues 2 to 22 (FMVN…FLTL), 71 to 91 (YIIA…PLPI), 98 to 118 (INLG…SILW), 146 to 166 (LAII…STLI), 171 to 191 (HTWL…STLA), 222 to 242 (LFFM…ATIF), 253 to 273 (EFFS…FLWV), and 294 to 314 (LPLT…LANI).

This sequence belongs to the complex I subunit 1 family.

Its subcellular location is the mitochondrion inner membrane. The enzyme catalyses a ubiquinone + NADH + 5 H(+)(in) = a ubiquinol + NAD(+) + 4 H(+)(out). In terms of biological role, core subunit of the mitochondrial membrane respiratory chain NADH dehydrogenase (Complex I) that is believed to belong to the minimal assembly required for catalysis. Complex I functions in the transfer of electrons from NADH to the respiratory chain. The immediate electron acceptor for the enzyme is believed to be ubiquinone. The protein is NADH-ubiquinone oxidoreductase chain 1 (MT-ND1) of Nycticebus coucang (Slow loris).